The primary structure comprises 565 residues: Probable peptidoglycan D,D-transpeptidase PbpC (565 aa).

The helical transmembrane segment at 10 to 30 (FILVVTLFVLASLAVSGRLVY) threads the bilayer. S289 (acyl-ester intermediate) is an active-site residue.

It belongs to the transpeptidase family. FtsI subfamily.

It localises to the cell inner membrane. It carries out the reaction Preferential cleavage: (Ac)2-L-Lys-D-Ala-|-D-Ala. Also transpeptidation of peptidyl-alanyl moieties that are N-acyl substituents of D-alanine.. The protein operates within cell wall biogenesis; peptidoglycan biosynthesis. Catalyzes cross-linking of the peptidoglycan cell wall at the division septum. Binds penicillin. The polypeptide is Probable peptidoglycan D,D-transpeptidase PbpC (Pseudomonas aeruginosa (strain ATCC 15692 / DSM 22644 / CIP 104116 / JCM 14847 / LMG 12228 / 1C / PRS 101 / PAO1)).